We begin with the raw amino-acid sequence, 198 residues long: uncharacterized protein (198 aa).

The protein resides in the cytoplasm. This is an uncharacterized protein from Saccharomyces cerevisiae (strain ATCC 204508 / S288c) (Baker's yeast).